The sequence spans 236 residues: MALPQKKYYRQRAHSNPIADHCFDYPSHPDDYDWTPLYPIISEKPNQVEFLDVGCGYGGLLVALSPMFPSNLMLGSEIRVKVSDYVNDRIKALRVQYPDQYQNVAVLRTNAMKYLPNFFHKGQLKKMFFLYPDPHFKKAKHKWRIINKWLLSEYAYVLCEQGIVYTITDVKDLNEWMVAHFEEHPLFESVPEEELKEDPIIEKLYESTEEGQKVTRNNGEKFLAVFRRIADKTKTN.

S-adenosyl-L-methionine-binding positions include glycine 54, 77–78 (EI), 110–111 (NA), and leucine 130. The active site involves aspartate 133. An S-adenosyl-L-methionine-binding site is contributed by 208 to 210 (TEE).

Belongs to the class I-like SAM-binding methyltransferase superfamily. TrmB family.

It is found in the nucleus. The catalysed reaction is guanosine(46) in tRNA + S-adenosyl-L-methionine = N(7)-methylguanosine(46) in tRNA + S-adenosyl-L-homocysteine. It functions in the pathway tRNA modification; N(7)-methylguanine-tRNA biosynthesis. Its function is as follows. Catalyzes the formation of N(7)-methylguanine at position 46 (m7G46) in tRNA. The protein is tRNA (guanine-N(7)-)-methyltransferase of Bombyx mori (Silk moth).